Reading from the N-terminus, the 162-residue chain is Caveolin-2 (162 aa).

The Cytoplasmic portion of the chain corresponds to 1 to 86; sequence MGLETEKADV…FEISKYVIYK (86 aa). Position 19 is a phosphotyrosine; by SRC (Tyr19). Phosphoserine occurs at positions 20 and 23. Position 27 is a phosphotyrosine; by SRC (Tyr27). At Ser36 the chain carries Phosphoserine. Residues 87-107 constitute an intramembrane region (helical); the sequence is FLTFFLAIPMAFAAGILFAIL. At 108–162 the chain is on the cytoplasmic side; that stretch reads SCLHIWIIMPFVKTCLMVLPSVQTIWKTITDVVIAPLCTSVGRSFSSISLQLSHD.

It belongs to the caveolin family. Monomer or homodimer. Interacts with CAV1; the interaction forms a stable heterooligomeric complex that is required for targeting to lipid rafts and for caveolae formation. Tyrosine phosphorylated forms do not form heterooligomers with the Tyr-19-phosphorylated form existing as a monomer or dimer, and the Tyr-27-form as a monomer only. Interacts (tyrosine phosphorylated form) with the SH2 domain-containing proteins, RASA1, NCK1 and SRC. Interacts (tyrosine phosphorylated form) with INSR, the interaction (Tyr-27-phosphorylated form) is increased on insulin stimulation. Interacts (Tyr-19 phosphorylated form) with MAPK1 (phosphorylated form); the interaction, promoted by insulin, leads to nuclear location and MAPK1 activation. Interacts with STAT3; the interaction is increased on insulin-induced tyrosine phosphorylation leading to STAT activation. Phosphorylated on serine and tyrosine residues. CAV1 promotes phosphorylation on Ser-23 which then targets the complex to the plasma membrane, lipid rafts and caveolae. Phosphorylation on Ser-36 appears to modulate mitosis in endothelial cells. Phosphorylation on both Tyr-19 and Tyr-27 is required for insulin-induced 'Ser-727' phosphorylation of STAT3 and its activation. Phosphorylation on Tyr-19 is required for insulin-induced phosphorylation of MAPK1 and DNA binding of STAT3. Tyrosine phosphorylation is induced by both EGF and insulin (By. similarity).

Its subcellular location is the nucleus. The protein resides in the cytoplasm. It is found in the golgi apparatus membrane. It localises to the cell membrane. The protein localises to the membrane. Its subcellular location is the caveola. Functionally, may act as a scaffolding protein within caveolar membranes. Interacts directly with G-protein alpha subunits and can functionally regulate their activity. Acts as an accessory protein in conjunction with CAV1 in targeting to lipid rafts and driving caveolae formation. The Ser-36 phosphorylated form has a role in modulating mitosis in endothelial cells. Positive regulator of cellular mitogenesis of the MAPK signaling pathway. Required for the insulin-stimulated nuclear translocation and activation of MAPK1 and STAT3, and the subsequent regulation of cell cycle progression. The sequence is that of Caveolin-2 (CAV2) from Mustela putorius furo (European domestic ferret).